A 391-amino-acid polypeptide reads, in one-letter code: Pepsin B (391 aa).

The N-terminal stretch at 1–16 (MKCLILALICLQLSEG) is a signal peptide. Positions 17 to 60 (LVVRQILHKGKSIRERMEENGVLEDFLRYNKKADPAAKFLFNKD) are cleaved as a propeptide — activation peptide. In terms of domain architecture, Peptidase A1 spans 75–388 (YFGEISIGTP…DMANNRVGFA (314 aa)). The active site involves Asp93. Intrachain disulfides connect Cys106-Cys111 and Cys270-Cys274. Asp279 is a catalytic residue. The cysteines at positions 313 and 346 are disulfide-linked.

It belongs to the peptidase A1 family.

The protein resides in the secreted. The enzyme catalyses Degradation of gelatin, little activity on hemoglobin. Specificity on B chain of insulin more restricted than that of pepsin A. Does not cleave 1-Phe-|-Val-2, 4-Gln-|-His-5 or 23-Gly-|-Phe-24.. Its function is as follows. Hydrolyzes various peptides including beta-endorphin, insulin B chain, dynorphin A, and neurokinin A, with high specificity for the cleavage of the Phe-Xaa bonds. This is Pepsin B from Monodelphis domestica (Gray short-tailed opossum).